We begin with the raw amino-acid sequence, 211 residues long: MTHWDITSSIQLGKKCNEKKVLAIALVTVFTGMGVAQAADVTAQAVATWSATAKKDTTSNLVVTSLGSLAFQYAEGIKGFNSQKGLFDVAIEGDSTATAFKLTSRLITNTLTQLDTSGSTLNVGVDYNGAAVEKTGDTVMIDTANGVLGGNLSPLANGYNASNRTTAQDGFTFTIISGTTNGTTAVTDYSTLPEGIWSGDVSVQFDATWTS.

The N-terminal stretch at 1–38 (MTHWDITSSIQLGKKCNEKKVLAIALVTVFTGMGVAQA) is a signal peptide.

Belongs to the EcpA/MatB fimbrillin family. In terms of assembly, self-associates. Forms filaments. Interacts with EcpD.

It is found in the fimbrium. In terms of biological role, part of the ecpRABCDE operon, which encodes the E.coli common pilus (ECP). ECP plays a dual role in early-stage biofilm development and host cell recognition. Major subunit of the fimbria. This chain is Common pilus major fimbrillin subunit EcpA (ecpA), found in Shigella boydii serotype 4 (strain Sb227).